We begin with the raw amino-acid sequence, 508 residues long: Amphoterin-induced protein 3 (508 aa).

A signal peptide spans methionine 1 to glycine 19. The Extracellular segment spans residues threonine 20–threonine 383. The LRRNT domain maps to aspartate 25–threonine 61. Disulfide bonds link cysteine 34-cysteine 40 and cysteine 38-cysteine 47. LRR repeat units follow at residues threonine 62–proline 83, arginine 86–asparagine 107, glycine 110–glutamate 133, glutamate 134–glycine 155, methionine 158–histidine 178, and arginine 184–proline 207. Asparagine 107 carries N-linked (GlcNAc...) asparagine glycosylation. A glycan (N-linked (GlcNAc...) asparagine) is linked at asparagine 142. An LRRCT domain is found at asparagine 219–valine 275. Cystine bridges form between cysteine 223/cysteine 251, cysteine 225/cysteine 273, and cysteine 300/cysteine 352. N-linked (GlcNAc...) asparagine glycosylation is found at asparagine 272, asparagine 301, asparagine 362, and asparagine 368. The region spanning proline 279–serine 370 is the Ig-like C2-type domain. The helical transmembrane segment at glycine 384–alanine 404 threads the bilayer. Residues proline 405–serine 508 lie on the Cytoplasmic side of the membrane.

This sequence belongs to the immunoglobulin superfamily. AMIGO family. Binds AMIGO1 or AMIGO2. Ubiquitous.

It localises to the membrane. Functionally, may mediate heterophilic cell-cell interaction. May contribute to signal transduction through its intracellular domain. The protein is Amphoterin-induced protein 3 of Mus musculus (Mouse).